Here is a 127-residue protein sequence, read N- to C-terminus: Small ribosomal subunit protein uS11 (127 aa).

This sequence belongs to the universal ribosomal protein uS11 family. In terms of assembly, part of the 30S ribosomal subunit. Interacts with proteins S7 and S18. Binds to IF-3.

Located on the platform of the 30S subunit, it bridges several disparate RNA helices of the 16S rRNA. Forms part of the Shine-Dalgarno cleft in the 70S ribosome. In Chlorobaculum parvum (strain DSM 263 / NCIMB 8327) (Chlorobium vibrioforme subsp. thiosulfatophilum), this protein is Small ribosomal subunit protein uS11.